Reading from the N-terminus, the 788-residue chain is Glucan 1,3-beta-glucosidase (788 aa).

Positions 1 to 42 are cleaved as a signal peptide; it reads MRFSSLLACLGAVGIQAAAIPFQRRVDNTTDSGSLDAAQAAA. Asn-28, Asn-233, Asn-381, and Asn-773 each carry an N-linked (GlcNAc...) asparagine glycan.

The protein belongs to the glycosyl hydrolase 55 family.

The enzyme catalyses Successive hydrolysis of beta-D-glucose units from the non-reducing ends of (1-&gt;3)-beta-D-glucans, releasing alpha-glucose.. This is Glucan 1,3-beta-glucosidase (EXG1) from Cochliobolus carbonum (Maize leaf spot fungus).